The sequence spans 560 residues: N-acetylglucosamine-6-sulfatase (560 aa).

Residues M1–A25 are disordered. The first 48 residues, M1–A48, serve as a signal peptide directing secretion. Residues D63, D64, and C99 each coordinate Ca(2+). The Nucleophile role is filled by C99. C99 carries the 3-oxoalanine (Cys) modification. N-linked (GlcNAc...) asparagine glycosylation is found at N119, N125, N191, N206, N218, N287, and N325. The Ca(2+) site is built by D334 and N335. Residues N370, N395, N413, N430, N457, and N488 are each glycosylated (N-linked (GlcNAc...) asparagine). S549 carries the post-translational modification Phosphoserine.

The protein belongs to the sulfatase family. The cofactor is Ca(2+). In terms of processing, the conversion to 3-oxoalanine (also known as C-formylglycine, FGly), of a serine or cysteine residue in prokaryotes and of a cysteine residue in eukaryotes, is critical for catalytic activity.

It localises to the lysosome. It catalyses the reaction Hydrolysis of the 6-sulfate groups of the N-acetyl-D-glucosamine 6-sulfate units of heparan sulfate and keratan sulfate.. Its function is as follows. Hydrolyzes 6-sulfate groups in N-acetyl-d-glucosaminide units of heparin sulfate and keratan sulfate. The polypeptide is N-acetylglucosamine-6-sulfatase (GNS) (Bos taurus (Bovine)).